A 236-amino-acid polypeptide reads, in one-letter code: Activating transcription factor of chaperone (236 aa).

Residues 117–185 (HRASQLASPQ…KNAATRYRQK (69 aa)) are disordered. A compositionally biased stretch (low complexity) spans 120–137 (SQLASPQHSSSSANASPR). Positions 162–175 (RPVDDRRSRKKEQN) are enriched in basic and acidic residues. The bZIP domain occupies 165–228 (DDRRSRKKEQ…RYLKALMRDL (64 aa)). Positions 167–187 (RRSRKKEQNKNAATRYRQKKK) are basic motif. The interval 193 to 228 (LLKEEQTLRQRHTELGEKCSDLQREIRYLKALMRDL) is leucine-zipper.

This sequence belongs to the bZIP family. As to quaternary structure, binds DNA as a dimer.

The protein localises to the nucleus. Transcriptional activator that acts in the unfolded protein response (UPR) pathway. Acts during endoplasmic reticulum (ER) stress by activating UPR target genes via direct binding to the UPR element (UPRE) (5'-GGAACTGGACAGCGTGTCGAAA-3'). Activates expression of ER chaperones ERP72 and PDI. In Bombyx mori (Silk moth), this protein is Activating transcription factor of chaperone.